We begin with the raw amino-acid sequence, 457 residues long: Argininosuccinate lyase (457 aa).

Belongs to the lyase 1 family. Argininosuccinate lyase subfamily.

It localises to the cytoplasm. It carries out the reaction 2-(N(omega)-L-arginino)succinate = fumarate + L-arginine. It functions in the pathway amino-acid biosynthesis; L-arginine biosynthesis; L-arginine from L-ornithine and carbamoyl phosphate: step 3/3. The chain is Argininosuccinate lyase from Yersinia pseudotuberculosis serotype O:1b (strain IP 31758).